Here is an 84-residue protein sequence, read N- to C-terminus: Putative membrane protein insertion efficiency factor (84 aa).

Belongs to the UPF0161 family.

It localises to the cell inner membrane. Its function is as follows. Could be involved in insertion of integral membrane proteins into the membrane. In Shewanella sp. (strain ANA-3), this protein is Putative membrane protein insertion efficiency factor.